The primary structure comprises 583 residues: R-linalool synthase QH5, chloroplastic (583 aa).

The transit peptide at 1 to 40 directs the protein to the chloroplast; it reads MASISLFPYSILKQTSPLARGTAYNRIYSTKTTGITVDVA. Arginine 298, aspartate 335, aspartate 339, arginine 476, and aspartate 479 together coordinate (2E)-geranyl diphosphate. Mg(2+) is bound by residues aspartate 335 and aspartate 339. Residues 335-339 carry the DDXXD motif motif; it reads DDVYD. The Mg(2+) site is built by aspartate 479, threonine 483, and glutamate 487. Aspartate 492 is a K(+) binding site.

It belongs to the terpene synthase family. Tpsb subfamily. Requires Mg(2+) as cofactor. Mn(2+) is required as a cofactor. K(+) serves as cofactor. As to expression, expressed in every aerial organ except for the stem stele of mature plants. Not detected in roots.

It is found in the plastid. The protein resides in the chloroplast. The enzyme catalyses (2E)-geranyl diphosphate + H2O = (R)-linalool + diphosphate. Its pathway is secondary metabolite biosynthesis; terpenoid biosynthesis. Monoterpene synthase that catalyzes the formation of (3R)-linalool from geranyl diphosphate, but not from isopentenyl diphosphate, dimethylallyl diphosphate, chrysanthemyl diphosphate, farnesyl diphosphate, (+)-copalyl diphosphate or geranylgeranyl diphosphate. This Artemisia annua (Sweet wormwood) protein is R-linalool synthase QH5, chloroplastic.